Reading from the N-terminus, the 302-residue chain is Mitochondrial adapter protein MCP1 (302 aa).

The interval M1 to R35 is disordered. At M1 to S61 the chain is on the cytoplasmic side. Residues L4–V12 carry the PxP motif. A helical transmembrane segment spans residues V62–V82. The Mitochondrial intermembrane segment spans residues S83–P100. Residues S101 to L121 traverse the membrane as a helical segment. Over R122–Q173 the chain is Cytoplasmic. Residues V174–V194 form a helical membrane-spanning segment. The Mitochondrial intermembrane portion of the chain corresponds to P195 to K219. Residues W220–S240 form a helical membrane-spanning segment. Over G241–S258 the chain is Cytoplasmic. The chain crosses the membrane as a helical span at residues T259 to M276. Residues K277–N302 are Mitochondrial intermembrane-facing.

As to quaternary structure, interacts (via PxP motif) with VPS13 (via SHR-BD domain).

Its subcellular location is the mitochondrion outer membrane. In terms of biological role, recruits the lipid transfer protein Vps13 to mitochondria thereby promoting vacuole-mitochondria contacts. Involved in mitochondrial lipid homeostasis. In Saccharomyces cerevisiae (strain ATCC 204508 / S288c) (Baker's yeast), this protein is Mitochondrial adapter protein MCP1.